Here is a 314-residue protein sequence, read N- to C-terminus: ATP synthase gamma chain (314 aa).

It belongs to the ATPase gamma chain family. F-type ATPases have 2 components, CF(1) - the catalytic core - and CF(0) - the membrane proton channel. CF(1) has five subunits: alpha(3), beta(3), gamma(1), delta(1), epsilon(1). CF(0) has three main subunits: a, b and c.

The protein localises to the cellular thylakoid membrane. Functionally, produces ATP from ADP in the presence of a proton gradient across the membrane. The gamma chain is believed to be important in regulating ATPase activity and the flow of protons through the CF(0) complex. The polypeptide is ATP synthase gamma chain (Synechocystis sp. (strain ATCC 27184 / PCC 6803 / Kazusa)).